The following is a 238-amino-acid chain: Uridylate kinase (238 aa).

12–15 serves as a coordination point for ATP; the sequence is KLSG. The segment at 20-25 is involved in allosteric activation by GTP; the sequence is GEKGFG. Residue Gly54 participates in UMP binding. 2 residues coordinate ATP: Gly55 and Arg59. Residues Asp72 and 133 to 140 contribute to the UMP site; that span reads TGNPYFST. Residues Tyr166 and Asp169 each coordinate ATP.

It belongs to the UMP kinase family. Homohexamer.

The protein resides in the cytoplasm. The catalysed reaction is UMP + ATP = UDP + ADP. It functions in the pathway pyrimidine metabolism; CTP biosynthesis via de novo pathway; UDP from UMP (UMPK route): step 1/1. Allosterically activated by GTP. Inhibited by UTP. In terms of biological role, catalyzes the reversible phosphorylation of UMP to UDP. The chain is Uridylate kinase from Clostridium botulinum (strain Langeland / NCTC 10281 / Type F).